A 511-amino-acid chain; its full sequence is FAD-dependent monooxygenase AOL_s00215g279 (511 aa).

The first 17 residues, 1–17 (MRFTLYGLLGFASLLHA), serve as a signal peptide directing secretion. The FAD-binding PCMH-type domain maps to 85–256 (CWVNPACIVS…TEFDLRTRYS (172 aa)). Pros-8alpha-FAD histidine is present on His122.

This sequence belongs to the oxygen-dependent FAD-linked oxidoreductase family.

The protein operates within secondary metabolite biosynthesis; terpenoid biosynthesis. In terms of biological role, FAD-dependent monooxygenase; part of the gene cluster that mediates the biosynthesis of sesquiterpenyl epoxy-cyclohexenoids (SECs) such as anthrobotrisins and arthrosporols, metabolites that possess a novel hybrid carbon skeleton consisting of a polyketide-derived epoxycyclohexenol combined with a terpenoid-derived monocyclic sesquiterpenol substructure (PKS-PTS hybrid). The SEC pathway plays an important role for fungal soil colonization via decreasing fungal nematode-capturing ability. Within the pathway, the FAD-dependent monooxygenase AOL_s00215g279 plays a role in the oxygenation of the phenol moiety, most likely in the epoxy formation. The pathway begins with the biosynthesis of 6-methylsalicylic acid (6-MSA), the first precursor of the polyketide-derived epoxycyclohexenol in arthrosporols, by the polyketide synthase (PKS) AOL_s00215g283 via condensation of 1 acetate and 3 malonate units. The 6-methylsalicylic acid decarboxylase AOL_s00215g281 then catalyzes the decarboxylation of 6-methylsalicylic acid to yield m-cresol. The cytochrome P450 monooxygenase AOL_s00215g282 further oxidizes m-cresol to yield toluquinol. With the assistance of the oxidoreductase AOL_s00215g277, the polyprenyl transferase AOL_s00215g276 catalyzes the farnesylation of toluquinol to produce farnesyl hydroquinone, the hybrid precursor for biosynthesis of SECs. Farnesyl hydroquinone undergoes epoxidation and then subsequent dehydrogenation to form farnesyl epoxy-quinone, the first and simplest SEC. The cytochrome P450 monooxygenase AOL_s00215g278 and the FAD-dependent monooxygenase AOL_s00215g279 might be involved in the oxygenation of the phenol moiety, most likely in the epoxy formation. The cytochrome P450 monooxygenases AOL_s00215g274 and AOL_s00215g280 are involved in specific regional ketone reductions at respectively C-4 and C-1 of farnesyl epoxy-quinone PubMed:33823587. This chain is FAD-dependent monooxygenase AOL_s00215g279, found in Arthrobotrys oligospora (strain ATCC 24927 / CBS 115.81 / DSM 1491) (Nematode-trapping fungus).